Here is a 109-residue protein sequence, read N- to C-terminus: U4-lycotoxin-Ls1a (109 aa).

The signal sequence occupies residues 1–22 (MKVLVLFSVLFLTLFSYSSTEA). The propeptide occupies 23 to 44 (IDELDSDAEEDMLSLMANEQVR). The interval 45 to 88 (AKACTPRLHDCSHDRHSCCRGELFKDVCYCFYPEGEDKTEVCSC) is knottin domain. Intrachain disulfides connect cysteine 48–cysteine 63, cysteine 55–cysteine 72, cysteine 62–cysteine 88, and cysteine 74–cysteine 86. The interval 89–108 (QQPKSHKYIEKVVDKAKTVV) is linear cationic cytotoxin domain.

Belongs to the neurotoxin 19 (CSTX) family. 05 (U4-Lctx) subfamily. As to expression, expressed by the venom gland.

It localises to the secreted. Functionally, enhances the high-affinity desensitization of human P2RX3 purinoceptors. The chain is U4-lycotoxin-Ls1a from Lycosa singoriensis (Wolf spider).